Reading from the N-terminus, the 158-residue chain is NADPH-dependent 7-cyano-7-deazaguanine reductase (158 aa).

The Thioimide intermediate role is filled by C56. The active-site Proton donor is D63. Substrate contacts are provided by residues 78-80 (LES) and 97-98 (HE).

The protein belongs to the GTP cyclohydrolase I family. QueF type 1 subfamily.

The protein localises to the cytoplasm. The catalysed reaction is 7-aminomethyl-7-carbaguanine + 2 NADP(+) = 7-cyano-7-deazaguanine + 2 NADPH + 3 H(+). It functions in the pathway tRNA modification; tRNA-queuosine biosynthesis. Functionally, catalyzes the NADPH-dependent reduction of 7-cyano-7-deazaguanine (preQ0) to 7-aminomethyl-7-deazaguanine (preQ1). The polypeptide is NADPH-dependent 7-cyano-7-deazaguanine reductase (Nitrobacter winogradskyi (strain ATCC 25391 / DSM 10237 / CIP 104748 / NCIMB 11846 / Nb-255)).